Here is a 472-residue protein sequence, read N- to C-terminus: Inhibitor of Apoptosis OPG037 (472 aa).

6 ANK repeats span residues 97–126 (DGNY…DPNA), 130–161 (HNKT…KINN), 233–263 (DGNT…DVNK), 267–297 (FGDS…VITD), 322–351 (YDST…ICED), and 353–377 (MYYA…SVDS).

The protein belongs to the orthopoxvirus OPG037 protein family. In terms of assembly, may interact with host caspase-9-Apaf-1 complex.

The protein resides in the host cytoplasm. Its function is as follows. Inhibits host apoptosis. Acts by associating with host apoptosome. The polypeptide is Inhibitor of Apoptosis OPG037 (OPG037) (Homo sapiens (Human)).